Consider the following 429-residue polypeptide: Adenylosuccinate synthetase (429 aa).

Residues 15–21 (GDEGKGK) and 43–45 (GHV) contribute to the GTP site. D16 functions as the Proton acceptor in the catalytic mechanism. Mg(2+) contacts are provided by D16 and G43. Residues 16-19 (DEGK), 41-44 (NAGH), T131, R145, Q225, T240, and R304 contribute to the IMP site. H44 functions as the Proton donor in the catalytic mechanism. 300–306 (SNTKRPR) contributes to the substrate binding site. GTP-binding positions include R306, 332 to 334 (LLD), and 414 to 416 (SVG).

Belongs to the adenylosuccinate synthetase family. Homodimer. Mg(2+) is required as a cofactor.

It is found in the cytoplasm. It catalyses the reaction IMP + L-aspartate + GTP = N(6)-(1,2-dicarboxyethyl)-AMP + GDP + phosphate + 2 H(+). It participates in purine metabolism; AMP biosynthesis via de novo pathway; AMP from IMP: step 1/2. Functionally, plays an important role in the de novo pathway of purine nucleotide biosynthesis. Catalyzes the first committed step in the biosynthesis of AMP from IMP. This Mesoplasma florum (strain ATCC 33453 / NBRC 100688 / NCTC 11704 / L1) (Acholeplasma florum) protein is Adenylosuccinate synthetase.